We begin with the raw amino-acid sequence, 143 residues long: Large ribosomal subunit protein uL15 (143 aa).

A disordered region spans residues 1–54 (MELNSIKPAEGAKHAKRRVGRGIGSGLGKTAGRGHKGQKSRSGGYHKVGFEGGQ). Residues 21 to 31 (RGIGSGLGKTA) are compositionally biased toward gly residues.

It belongs to the universal ribosomal protein uL15 family. As to quaternary structure, part of the 50S ribosomal subunit.

In terms of biological role, binds to the 23S rRNA. This chain is Large ribosomal subunit protein uL15, found in Paracidovorax citrulli (strain AAC00-1) (Acidovorax citrulli).